Here is a 552-residue protein sequence, read N- to C-terminus: Mothers against decapentaplegic homolog 4 (552 aa).

Residues 1-322 (MDNMSITNTP…PISNHPAPEY (322 aa)) are mediates interaction with ZBTB7A. An MH1 domain is found at 18–142 (SIVHSLMCHR…YERVVSPGID (125 aa)). Residue K37 is modified to N6-acetyllysine. The tract at residues 44 to 69 (VKKLKEKKDELDSLITAITTNGAHPS) is required for interaction with TSC22D1. C71 is a binding site for Zn(2+). Residue K113 forms a Glycyl lysine isopeptide (Lys-Gly) (interchain with G-Cter in SUMO2) linkage. Positions 115, 127, and 132 each coordinate Zn(2+). Disordered regions lie at residues 168–194 (GQPS…STET) and 236–256 (GLLQ…FTGQ). Composition is skewed to polar residues over residues 170–194 (PSLS…STET) and 245–256 (QPGQQQNGFTGQ). The segment at 275-320 (PYTPNLPHHQNGHLQHHPPMPPHPGHYWPVHNELAFQPPISNHPAP) is SAD. One can recognise an MH2 domain in the interval 323 to 552 (WCSIAYFEMD…MPIADPQPLD (230 aa)). N6-acetyllysine occurs at positions 428 and 507. K519 participates in a covalent cross-link: Glycyl lysine isopeptide (Lys-Gly) (interchain with G-Cter in ubiquitin).

It belongs to the dwarfin/SMAD family. As to quaternary structure, monomer; in the absence of TGF-beta activation. Heterotrimer; on TGF-beta activation. Heterotrimer composed of two molecules of a C-terminally phosphorylated R-SMAD molecule, SMAD2 or SMAD3, and one molecule of SMAD4 to form the transcriptional active SMAD2/SMAD3-SMAD4 complex. Found in a ternary complex composed of SMAD4, STK11/LKB1 and STK11IP. Found in a complex with SMAD1 and YY1. Identified in a complex that contains at least ZNF451, SMAD2, SMAD3 and SMAD4. Interacts with ATF2, COPS5, DACH1, MSG1, SKI, STK11/LKB1, STK11IP and TRIM33. Associates with ZNF423 or ZNF521 in response to BMP2 leading to activate transcription of BMP target genes. Interacts with USP9X. Interacts (via the MH1 and MH2 domains) with RBPMS. Interacts with WWTR1 (via coiled-coil domain). Interacts with CITED1 and CITED2. Interacts with PDPK1 (via PH domain). Interacts with VPS39; this interaction affects heterodimer formation with SMAD3, but not with SMAD2, and leads to inhibition of SMAD3-dependent transcription activation. Interactions with VPS39 and SMAD2 may be mutually exclusive. Interacts (via MH2 domain) with ZNF451 (via N-terminal zinc-finger domains). Interacts with ZC3H3. Interacts weakly with ZNF8. Interacts with NUP93 and IPO7; translocates SMAD4 to the nucleus through the NPC upon BMP7 stimulation resulting in activation of SMAD4 signaling. Interacts with CREB3L1, the interaction takes place upon TGFB1 induction and SMAD4 acts as a CREB3L1 coactivator to induce the expression of genes involved in the assembly of collagen extracellular matrix. Interacts with DLX1. Interacts with ZBTB7A; the interaction is direct and stimulated by TGFB1. Interacts with CREBBP; the recruitment of this transcriptional coactivator is negatively regulated by ZBTB7A. Interacts with EP300; the interaction with this transcriptional coactivator is negatively regulated by ZBTB7A. Interacts with HDAC1. Interacts (via MH2 domain) with ZMIZ1 (via SP-RING-type domain); in the TGF-beta signaling pathway increases the activity of the SMAD3/SMAD4 transcriptional complex. Interacts (via N-terminus) with TSC22D1. In terms of processing, phosphorylated by PDPK1. Post-translationally, monoubiquitinated on Lys-519 by E3 ubiquitin-protein ligase TRIM33. Monoubiquitination hampers its ability to form a stable complex with activated SMAD2/3 resulting in inhibition of TGF-beta/BMP signaling cascade. Deubiquitination by USP9X restores its competence to mediate TGF-beta signaling.

Its subcellular location is the cytoplasm. It is found in the nucleus. Functionally, in muscle physiology, plays a central role in the balance between atrophy and hypertrophy. When recruited by MSTN, promotes atrophy response via phosphorylated SMAD2/4. MSTN decrease causes SMAD4 release and subsequent recruitment by the BMP pathway to promote hypertrophy via phosphorylated SMAD1/5/8. Acts synergistically with SMAD1 and YY1 in bone morphogenetic protein (BMP)-mediated cardiac-specific gene expression. Binds to SMAD binding elements (SBEs) (5'-GTCT/AGAC-3') within BMP response element (BMPRE) of cardiac activating regions. Common SMAD (co-SMAD) is the coactivator and mediator of signal transduction by TGF-beta (transforming growth factor). Component of the heterotrimeric SMAD2/SMAD3-SMAD4 complex that forms in the nucleus and is required for the TGF-mediated signaling. Promotes binding of the SMAD2/SMAD4/FAST-1 complex to DNA and provides an activation function required for SMAD1 or SMAD2 to stimulate transcription. Component of the multimeric SMAD3/SMAD4/JUN/FOS complex which forms at the AP1 promoter site; required for synergistic transcriptional activity in response to TGF-beta. May act as a tumor suppressor. Positively regulates PDPK1 kinase activity by stimulating its dissociation from the 14-3-3 protein YWHAQ which acts as a negative regulator. The sequence is that of Mothers against decapentaplegic homolog 4 (SMAD4) from Homo sapiens (Human).